We begin with the raw amino-acid sequence, 483 residues long: Dual specificity protein phosphatase 10 (483 aa).

The Rhodanese domain maps to 169 to 286; sequence PSQGPVIIDC…FKQNHGNLCD (118 aa). An interaction with MAP kinases region spans residues 200-216; that stretch reads KISRRRLQQGKITVLDL. Residues 322–465 enclose the Tyrosine-protein phosphatase domain; sequence ELTPILPFLF…LLEFEEDLNN (144 aa). Catalysis depends on cysteine 409, which acts as the Phosphocysteine intermediate.

Belongs to the protein-tyrosine phosphatase family. Non-receptor class dual specificity subfamily. Monomer. Interacts with MAPK14.

It localises to the cytoplasm. Its subcellular location is the nucleus. It catalyses the reaction O-phospho-L-tyrosyl-[protein] + H2O = L-tyrosyl-[protein] + phosphate. The enzyme catalyses O-phospho-L-seryl-[protein] + H2O = L-seryl-[protein] + phosphate. It carries out the reaction O-phospho-L-threonyl-[protein] + H2O = L-threonyl-[protein] + phosphate. In terms of biological role, protein phosphatase involved in the inactivation of MAP kinases. Has a specificity for the MAPK11/MAPK12/MAPK13/MAPK14 subfamily. It preferably dephosphorylates p38. This chain is Dual specificity protein phosphatase 10 (Dusp10), found in Mus musculus (Mouse).